The chain runs to 123 residues: Molluscan insulin-related peptide 1 (123 aa).

A signal peptide spans 1–31 (MAGVRLVFTKAFMVTVLLTLLLNIGVKPAEG). Gln32 is modified (pyrrolidone carboxylic acid). Disulfide bonds link Cys48/Cys109, Cys60/Cys122, and Cys108/Cys113. Positions 68–69 (MV) are excised as a propeptide. Gln99 carries the post-translational modification Pyrrolidone carboxylic acid.

Belongs to the insulin family. As to quaternary structure, heterodimer of a B chain and an A chain linked by two disulfide bonds. Expressed in the cerebral light-green cells which are giant neuroendocrines cells involved in the control of growth.

It localises to the cytoplasmic vesicle. The protein resides in the secretory vesicle. This Lymnaea stagnalis (Great pond snail) protein is Molluscan insulin-related peptide 1.